Reading from the N-terminus, the 481-residue chain is Bindin (481 aa).

A signal peptide spans 1–20 (MGFHQILVTVVALALASVRA). The propeptide occupies 21–245 (EFPSRTDSPT…DSKRGARKKR (225 aa)). Basic and acidic residues-rich tracts occupy residues 154–163 (DGDLRKRRES) and 178–189 (RKGDEPAGHTLK). 2 disordered regions span residues 154 to 193 (DGDL…DLAP) and 219 to 243 (GHSP…GARK). Residues 352 to 360 (LRHLRHHSN) form a fucose-binding domain region. The tract at residues 376–481 (SAMQEEEEEE…QPYGQGYLQG (106 aa)) is disordered. A compositionally biased stretch (acidic residues) spans 379–389 (QEEEEEEEEDA). Positions 406-416 (AGFGGGGGGGA) are enriched in gly residues. Low complexity-rich tracts occupy residues 417-440 (MMSP…MGFP) and 464-481 (GMGM…YLQG).

Belongs to the bindin family.

It is found in the cytoplasmic vesicle. It localises to the secretory vesicle. Its subcellular location is the acrosome lumen. Its function is as follows. Species-specific sea urchin sperm protein required for adhesion of sperm to the egg surface during fertilization. Bindin coats the acrosomal process after it is externalized by the acrosome reaction. It binds to sulfated, fucose-containing polysaccharides on the vitelline layer receptor proteoglycans which cover the egg plasma membrane. This chain is Bindin, found in Strongylocentrotus purpuratus (Purple sea urchin).